A 562-amino-acid chain; its full sequence is Protein wntless (562 aa).

Over 1–13 (MSGTILENLSGRK) the chain is Cytoplasmic. The helical transmembrane segment at 14–34 (LSILVTTLLLCQVLCFLLGGL) threads the bilayer. Topologically, residues 35–239 (YAPLPAGHVT…AIHQNGGFTQ (205 aa)) are lumenal. Asn-58 carries an N-linked (GlcNAc...) asparagine glycan. Residues 240-260 (IWLLLKTVLFPFVVGIMIWFW) traverse the membrane as a helical segment. Over 261-270 (RRVHLLQRSP) the chain is Cytoplasmic. The helical transmembrane segment at 271-291 (ALLEYMLIYLGAALTFLNLPL) threads the bilayer. Residues 292 to 311 (EYLSLVFEMPYMLLLSDIRQ) are Lumenal-facing. Residues 312-332 (GIFYAMLLTFWLVFAGEHMLI) traverse the membrane as a helical segment. Residues 333–344 (QDAPNKSTIRSR) lie on the Cytoplasmic side of the membrane. The helical transmembrane segment at 345–365 (YWKHLSAVVVGCISLFVFDIC) threads the bilayer. Residues 366-390 (ERGVQLRNPFYSIWAMPLAAKMAMT) lie on the Lumenal side of the membrane. Residues 391 to 411 (FIVLAGVSAAIYFLFLCYMIW) traverse the membrane as a helical segment. Residues 412–441 (KVFRNIGDKRTSLPSMSQARRLHYESLIYR) lie on the Cytoplasmic side of the membrane. Residues 442–462 (FKFLMLATIVCAALTVTGFIM) form a helical membrane-spanning segment. Residues 463 to 482 (GQRAEGQWDWNDNVAIQPTS) lie on the Lumenal side of the membrane. A helical transmembrane segment spans residues 483 to 503 (AFLTGVYGMWNIYIFALLILY). The Cytoplasmic segment spans residues 504–562 (APSHKQWPTMHHSDETTQSNENIVASAASEEIEFSHLPSDSNPSEISSLTSFTRKVAFD). Residues 539–562 (HLPSDSNPSEISSLTSFTRKVAFD) form a disordered region. Residues 541 to 556 (PSDSNPSEISSLTSFT) show a composition bias toward polar residues.

It belongs to the wntless family. As to quaternary structure, interacts with wg; in the Golgi. Interacts with Vps35, a component of the retromer complex; wls stability is regulated by Vps35.

The protein localises to the presynaptic cell membrane. It is found in the postsynaptic cell membrane. The protein resides in the cell membrane. It localises to the endoplasmic reticulum membrane. Its subcellular location is the endosome membrane. The protein localises to the golgi apparatus membrane. A segment polarity gene required for wingless (wg)-dependent patterning processes, acting in both wg-sending cells and wg-target cells. In non-neuronal cells wls directs wg secretion. The wls traffic loop encompasses the Golgi, the cell surface, an endocytic compartment and a retrograde route leading back to the Golgi, and involves clathrin-mediated endocytosis and the retromer complex (a conserved protein complex consisting of Vps35 and Vps26). In neuronal cells (the larval motorneuron NMJ), the wg signal moves across the synapse via the release of wls-containing exosome-like vesicles. Postsynaptic wls is required for the trafficking of fz2 through the fz2-interacting protein Grip. The protein is Protein wntless of Drosophila erecta (Fruit fly).